We begin with the raw amino-acid sequence, 228 residues long: Aquaporin Z (228 aa).

2 helical membrane passes run 1 to 21 (MLNK…GGCG) and 23 to 43 (AILA…ALAF). Positions 63 to 65 (NPA) match the NPA 1 motif. The next 3 membrane-spanning stretches (helical) occupy residues 82–102 (IPYW…LYVI), 129–149 (MMAG…IILG), and 154–174 (LAPA…IHLV). Residues 184-186 (NPA) carry the NPA 2 motif. A helical transmembrane segment spans residues 205–225 (LFWVAPLVGAVIGAIIWKGLL).

This sequence belongs to the MIP/aquaporin (TC 1.A.8) family. As to quaternary structure, homotetramer.

The protein resides in the cell inner membrane. The enzyme catalyses H2O(in) = H2O(out). Its function is as follows. Channel that permits osmotically driven movement of water in both directions. It is involved in the osmoregulation and in the maintenance of cell turgor during volume expansion in rapidly growing cells. It mediates rapid entry or exit of water in response to abrupt changes in osmolarity. This Brucella abortus biovar 1 (strain 9-941) protein is Aquaporin Z.